Here is a 160-residue protein sequence, read N- to C-terminus: Transcriptional repressor NrdR (160 aa).

A zinc finger spans residues 3-34; that stretch reads CPFCGNADTQVVDSRVSEEGDTIRRRRRCLSC. The ATP-cone domain occupies 49 to 139; it reads PSVVKRDGSR…VYKSFEDIGE (91 aa).

Belongs to the NrdR family. It depends on Zn(2+) as a cofactor.

Functionally, negatively regulates transcription of bacterial ribonucleotide reductase nrd genes and operons by binding to NrdR-boxes. This Bordetella bronchiseptica (strain ATCC BAA-588 / NCTC 13252 / RB50) (Alcaligenes bronchisepticus) protein is Transcriptional repressor NrdR.